A 327-amino-acid chain; its full sequence is Arabinose 5-phosphate isomerase KdsD (327 aa).

In terms of domain architecture, SIS spans 41–183; sequence ILENNRDKSR…AIALLKAKNF (143 aa). Substrate-binding positions include 74–75, H81, H87, 113–122, 147–149, T221, and E273; these read GT, GLLPMIKHLD, and HVD. H81 serves as a coordination point for Zn(2+). A CBS 1 domain is found at 209–268; the sequence is MRKGNEIPIVKPTDNIRKAILEISDKGVGNTLVAENNTLLGIFTDGDLRRMFEAESFNSQ. One can recognise a CBS 2 domain in the interval 275 to 327; that stretch reads MTKNPKSISKEEMAITALEKMEKYEITSLAVVDNGHNILGIVTMHDLIKLELR.

It belongs to the SIS family. GutQ/KpsF subfamily. Homotetramer.

The catalysed reaction is D-arabinose 5-phosphate = D-ribulose 5-phosphate. It functions in the pathway carbohydrate biosynthesis; 3-deoxy-D-manno-octulosonate biosynthesis; 3-deoxy-D-manno-octulosonate from D-ribulose 5-phosphate: step 1/3. The protein operates within bacterial outer membrane biogenesis; lipopolysaccharide biosynthesis. With respect to regulation, inhibited by hydroxamates, mimicking the putative enediol reaction intermediate. Most potent inhibition, with an IC(50) of 0.7 uM, is obtained with the 4 carbon-based hydroxamate containing acetyl moieties. Functionally, involved in the biosynthesis of 3-deoxy-D-manno-octulosonate (KDO), a unique 8-carbon sugar component of lipopolysaccharides (LPSs). Catalyzes the reversible aldol-ketol isomerization between D-ribulose 5-phosphate (Ru5P) and D-arabinose 5-phosphate (A5P). The chain is Arabinose 5-phosphate isomerase KdsD (kdsD) from Francisella tularensis subsp. tularensis (strain SCHU S4 / Schu 4).